Here is a 352-residue protein sequence, read N- to C-terminus: Dolichol-phosphate mannosyltransferase (352 aa).

The Cytoplasmic segment spans residues 1-229 (MKVSVIIPTY…HIYRLMKWEG (229 aa)). Pro-8, Tyr-10, Glu-12, Val-37, Asp-39, Asp-89, Ala-90, Asp-91, Gln-93, Arg-117, Val-156, Lys-178, Arg-202, and Lys-208 together coordinate GDP-alpha-D-mannose. Residues Asp-91 and Gln-93 each contribute to the Mg(2+) site. The Mn(2+) site is built by Asp-91 and Gln-93. Residues 230–256 (EIDRIVKFSIVGLSGILVNEGFLWLFV) traverse the membrane as a helical segment. Over 257–261 (NLGIP) the chain is Extracellular. The chain crosses the membrane as a helical span at residues 262-286 (KEIAVIPAVELSILNNFFWNDIWTF). Residues 287–293 (KDIRRGS) lie on the Cytoplasmic side of the membrane. Residues 294–320 (IFSRLLKFHIAALSGAVVNFIVYWILL) form a helical membrane-spanning segment. Over 321–325 (FLGIH) the chain is Extracellular. The chain crosses the membrane as a helical span at residues 326 to 350 (YLIANLVGIVLSFGVRYVINRHVTW). Over 351-352 (AT) the chain is Cytoplasmic.

It belongs to the glycosyltransferase 2 family. Mg(2+) serves as cofactor. Mn(2+) is required as a cofactor. The cofactor is Ca(2+).

The protein localises to the cell membrane. The catalysed reaction is a di-trans,poly-cis-dolichyl phosphate + GDP-alpha-D-mannose = a di-trans,poly-cis-dolichyl beta-D-mannosyl phosphate + GDP. The protein operates within protein modification; protein glycosylation. Its function is as follows. Transfers mannose from GDP-mannose to dolichol monophosphate to form dolichol phosphate mannose (Dol-P-Man) which is the mannosyl donor in pathways leading to N-glycosylation, glycosyl phosphatidylinositol membrane anchoring, and O-mannosylation of proteins. In Pyrococcus furiosus (strain ATCC 43587 / DSM 3638 / JCM 8422 / Vc1), this protein is Dolichol-phosphate mannosyltransferase.